Consider the following 283-residue polypeptide: Beta-glucoside operon antiterminator (283 aa).

PRD domains lie at 65–170 (RIPL…SHMP) and 171–280 (EVMR…LQEQ).

It belongs to the transcriptional antiterminator BglG family. In terms of processing, phosphorylated and inactivated by ArbF (EII-Bgl). The degree of phosphorylation is dependent on the presence or absence of beta-glucosides which act as inducers of the operon expression. Addition of inducer result in the rapid dephosphorylation of ArbG.

In terms of biological role, mediates the positive regulation of the beta-glucoside (arb) operon by functioning as a transcriptional antiterminator. This is an RNA-binding protein that recognizes a specific sequence located just upstream of two termination sites within the operon. The sequence is that of Beta-glucoside operon antiterminator (arbG) from Dickeya chrysanthemi (Pectobacterium chrysanthemi).